We begin with the raw amino-acid sequence, 436 residues long: MRKSVVAIVGRPNVGKSTIFNRLVGERISIVEDIPGVTRDRIYANAEWLNHTFNIIDTGGIELGDEPLLVQMRQQAEIAIDEADVIVFLLNGKEGITSADDEVAKLLFKSNKPVVVGVNKMDNPQMHETIYEYYSLGFGQPFPISGTHGLGLGDLLDEVVGHFPNESEEEKDEDTIYFSLIGRPNVGKSSLVNALLNEDRVIVSEIEGTTRDAIDTKLHRDDQDFVIIDTAGMRKRGKVYESTEKYSVLRALRAIERSDVVLVLIDAETGIREQDKRIAGYAHDAGRAIVIVVNKWDTVDSNEKAMKEFEKNIRAHFQYLDYAPVVFLSAKTKKRMHTLVPAIKLASESHTKRIPTNVLNDVIMDAIAMNPTPTLKGKRLKVLYATQVAVQPPSFVVFVNDPELMHFSYERFLENKIRDAFGFVGTPIKLFARRRQ.

EngA-type G domains follow at residues 4–167 and 176–351; these read SVVA…PNES and IYFS…ESHT. Residues 10–17, 57–61, 119–122, 182–189, 229–233, and 294–297 contribute to the GTP site; these read GRPNVGKS, DTGGI, NKMD, DTAGM, and NKWD. Residues 352–436 enclose the KH-like domain; it reads KRIPTNVLND…PIKLFARRRQ (85 aa).

The protein belongs to the TRAFAC class TrmE-Era-EngA-EngB-Septin-like GTPase superfamily. EngA (Der) GTPase family. In terms of assembly, associates with the 50S ribosomal subunit.

In terms of biological role, GTPase that plays an essential role in the late steps of ribosome biogenesis. The polypeptide is GTPase Der (Oceanobacillus iheyensis (strain DSM 14371 / CIP 107618 / JCM 11309 / KCTC 3954 / HTE831)).